We begin with the raw amino-acid sequence, 239 residues long: Large ribosomal subunit protein uL2 (239 aa).

The tract at residues 202-239 is disordered; that stretch reads HGGGSHQHVGRPSTVARNTPPGRKVGHIAARRTGRRKG. Basic residues predominate over residues 225–239; that stretch reads KVGHIAARRTGRRKG.

This sequence belongs to the universal ribosomal protein uL2 family. Part of the 50S ribosomal subunit. Forms a bridge to the 30S subunit in the 70S ribosome.

Functionally, one of the primary rRNA binding proteins. Required for association of the 30S and 50S subunits to form the 70S ribosome, for tRNA binding and peptide bond formation. It has been suggested to have peptidyltransferase activity; this is somewhat controversial. Makes several contacts with the 16S rRNA in the 70S ribosome. The protein is Large ribosomal subunit protein uL2 of Desulfurococcus amylolyticus (strain DSM 18924 / JCM 16383 / VKM B-2413 / 1221n) (Desulfurococcus kamchatkensis).